We begin with the raw amino-acid sequence, 350 residues long: Methionine import ATP-binding protein MetN (350 aa).

One can recognise an ABC transporter domain in the interval 2 to 241 (IQIKNLKKEY…PQAPVTRSFV (240 aa)). 38–45 (GHSGAGKS) contributes to the ATP binding site.

The protein belongs to the ABC transporter superfamily. Methionine importer (TC 3.A.1.24) family. In terms of assembly, the complex is composed of two ATP-binding proteins (MetN), two transmembrane proteins (MetI) and a solute-binding protein (MetQ).

It is found in the cell inner membrane. The enzyme catalyses L-methionine(out) + ATP + H2O = L-methionine(in) + ADP + phosphate + H(+). The catalysed reaction is D-methionine(out) + ATP + H2O = D-methionine(in) + ADP + phosphate + H(+). Part of the ABC transporter complex MetNIQ involved in methionine import. Responsible for energy coupling to the transport system. The polypeptide is Methionine import ATP-binding protein MetN (Francisella tularensis subsp. tularensis (strain SCHU S4 / Schu 4)).